The sequence spans 591 residues: Aspartate--tRNA(Asp/Asn) ligase (591 aa).

Glutamate 174 is a binding site for L-aspartate. Positions 198 to 201 are aspartate; that stretch reads QLFK. Arginine 220 is an L-aspartate binding site. Residues 220–222 and glutamine 229 each bind ATP; that span reads RDE. Residue histidine 450 participates in L-aspartate binding. Residue glutamate 483 participates in ATP binding. An L-aspartate-binding site is contributed by arginine 490. 535–538 provides a ligand contact to ATP; the sequence is GLDR.

It belongs to the class-II aminoacyl-tRNA synthetase family. Type 1 subfamily. Homodimer.

It is found in the cytoplasm. The catalysed reaction is tRNA(Asx) + L-aspartate + ATP = L-aspartyl-tRNA(Asx) + AMP + diphosphate. Aspartyl-tRNA synthetase with relaxed tRNA specificity since it is able to aspartylate not only its cognate tRNA(Asp) but also tRNA(Asn). Reaction proceeds in two steps: L-aspartate is first activated by ATP to form Asp-AMP and then transferred to the acceptor end of tRNA(Asp/Asn). This is Aspartate--tRNA(Asp/Asn) ligase from Pseudomonas putida (strain ATCC 700007 / DSM 6899 / JCM 31910 / BCRC 17059 / LMG 24140 / F1).